The primary structure comprises 306 residues: MEEEKKKSRVLIIGATGRLGNYLTRFSIESGHPTFALIRNTTLSDKLKSLSDAGVTLLKGSLEDEGSLAEAVSKVDVVISAIPSKHVLDQKLLVRVIKQAGSIKRFIPAEYGANPDKTQVSDLDHDFYSKKSEIRHMIESEGIPYTYICCGLFMRVLLPSLVQPGLQSPPTDKVTVFGDGNVKAVFVNDVDVAAFTIKTIDDPRTLNKTLYLSPPGNICSMNDLVELWEGKIEKKLEKTFATENQLLKKIKETPYPDNMEMVFIYSVFIKGDHTYFDIESCGGVNGTELYPDVKYMTVSEFLDTLL.

NADP(+) contacts are provided by residues 14–20 (GATGRLG), Arg39, and Lys46. The active-site Proton acceptor is Lys131. Position 135 (Arg135) interacts with NADP(+).

This sequence belongs to the NmrA-type oxidoreductase family. Isoflavone reductase subfamily. Dimer.

Probable reductase that might be involved in the reduction of lariciresinol into secoisolariciresinol. In most plant species, a single enzyme is able to reduce both pinoresinol and lariciresinol efficiently while in Arabidopsis, PRR1 and PRR2 show a strict substrate selectivity for pinoresinol. This Arabidopsis thaliana (Mouse-ear cress) protein is Probable pinoresinol-lariciresinol reductase 3 (PLR3).